The sequence spans 311 residues: Mitochondrial FAD carrier protein FLX1 (311 aa).

Solcar repeat units lie at residues 7-101 (TPLQ…TKEL), 123-210 (MNSL…LKQR), and 224-310 (LTNL…LKHR). 6 helical membrane-spanning segments follow: residues 13-33 (VISG…LDLL), 77-97 (LSIN…LYGV), 129-149 (LSAG…IWVI), 183-203 (LWKG…YFAV), 230-250 (IEIT…FQLL), and 266-286 (LFPL…YKGL).

Belongs to the mitochondrial carrier (TC 2.A.29) family.

It is found in the mitochondrion inner membrane. Functionally, transport of FAD from the cytosol to the mitochondrial matrix. The polypeptide is Mitochondrial FAD carrier protein FLX1 (FLX1) (Saccharomyces cerevisiae (strain ATCC 204508 / S288c) (Baker's yeast)).